The following is a 425-amino-acid chain: COBRA-like protein 4 (425 aa).

An N-terminal signal peptide occupies residues 1-27 (MAIGVGGCCAVLLAAALLFSSPATTYA). N-linked (GlcNAc...) asparagine glycans are attached at residues N36, N163, N171, N319, and N352.

The protein belongs to the COBRA family.

This is COBRA-like protein 4 (BC1L9) from Oryza sativa subsp. japonica (Rice).